We begin with the raw amino-acid sequence, 447 residues long: MLENIRDAVRKFLTGSTPYEKAVDEFIKELQKSLISSDVNVKLVFSLTAKIKERLNKEKPPSVLERKEWFISIVYDELSKLFGGDKEPNVNPTRLPFIIMLVGVQGSGKTTTAGKLAYFYKRRGYKVGLVAADVYRPAAYDQLLQLGNQIGVPVYGEPNNQNAIEIAKKGVDTFVKNKMDIIIVDTAGRHGYGEETKLLEEMKEIYEALKPDDVILVIDASIGQKAYDLASRFHQASPIGSIIITKMDGTAKGGGALSAVAATGATIKFIGTGEKIDELEIFNAKRYVSRILGMGDIESILEKVKGLEEYEKIQKKMEDVMEGKGKLTLRDVYAQIMALRKMGPLSKVLQHIPGLGVMLPTPSEDQLKLGEEKIRRWLAALNSMTYKELENPSIIDKSRMRRIAEGSGLEVEDVRELLEWYNNMNKLLKMVKRRRGSIDKLFGGKIG.

GTP-binding positions include 103 to 110 (GVQGSGKT), 185 to 189 (DTAGR), and 245 to 248 (TKMD).

Belongs to the GTP-binding SRP family. SRP54 subfamily. Part of the signal recognition particle protein translocation system, which is composed of SRP and FtsY. Archaeal SRP consists of a 7S RNA molecule of 300 nucleotides and two protein subunits: SRP54 and SRP19.

The protein resides in the cytoplasm. The enzyme catalyses GTP + H2O = GDP + phosphate + H(+). In terms of biological role, involved in targeting and insertion of nascent membrane proteins into the cytoplasmic membrane. Binds to the hydrophobic signal sequence of the ribosome-nascent chain (RNC) as it emerges from the ribosomes. The SRP-RNC complex is then targeted to the cytoplasmic membrane where it interacts with the SRP receptor FtsY. This Saccharolobus islandicus (strain L.S.2.15 / Lassen #1) (Sulfolobus islandicus) protein is Signal recognition particle 54 kDa protein.